A 329-amino-acid polypeptide reads, in one-letter code: Prostaglandin reductase 1 (329 aa).

Thr18 is modified (phosphothreonine). NADP(+) contacts are provided by residues 152–155 (GAVG), Lys178, Tyr193, Asn217, 239–245 (CGAISQY), 270–272 (FIV), and Asn321. Lys178 is modified (N6-(2-hydroxyisobutyryl)lysine; alternate). Lys178 carries the post-translational modification N6-acetyllysine; alternate.

This sequence belongs to the NADP-dependent oxidoreductase L4BD family. Monomer or homodimer.

It localises to the cytoplasm. The catalysed reaction is 13,14-dihydro-15-oxo-prostaglandin E1 + NADP(+) = 15-oxoprostaglandin E1 + NADPH + H(+). It catalyses the reaction 13,14-dihydro-15-oxo-prostaglandin E2 + NADP(+) = 15-oxoprostaglandin E2 + NADPH + H(+). The enzyme catalyses 13,14-dihydro-15-oxo-prostaglandin F1alpha + NADP(+) = 15-oxoprostaglandin F1alpha + NADPH + H(+). It carries out the reaction 13,14-dihydro-15-oxo-PGF2alpha + NADP(+) = 15-oxoprostaglandin F2alpha + NADPH + H(+). The catalysed reaction is leukotriene B4 + NADP(+) = 12-oxo-leukotriene B4 + NADPH + H(+). It catalyses the reaction 20-hydroxy-leukotriene B4 + NADP(+) = 12-oxo-20-hydroxy-leukotriene B4 + NADPH + H(+). The enzyme catalyses 6-trans-leukotriene B4 + NADP(+) = 12-oxo-(5S)-hydroxy-(6E,8E,10E,14Z)-eicosatetraenoate + NADPH + H(+). It carries out the reaction (5S,12S)-dihydroxy-(6E,10E,12E,14Z)-eicosatetraenoate + NADP(+) = 12-oxo-(5S)-hydroxy-(6E,8E,10E,14Z)-eicosatetraenoate + NADPH + H(+). The catalysed reaction is an n-alkanal + NADP(+) = an alk-2-enal + NADPH + H(+). It catalyses the reaction hexanal + NADP(+) = (E)-hex-2-enal + NADPH + H(+). The enzyme catalyses octanal + NADP(+) = (2E)-octenal + NADPH + H(+). It carries out the reaction decanal + NADP(+) = (2E)-decenal + NADPH + H(+). The catalysed reaction is dodecanal + NADP(+) = (2E)-dodecenal + NADPH + H(+). It catalyses the reaction 4-hydroxynonanal + NADP(+) = (E)-4-hydroxynon-2-enal + NADPH + H(+). The enzyme catalyses pentan-2-one + NADP(+) = (E)-pent-3-en-2-one + NADPH + H(+). It carries out the reaction nonan-2-one + NADP(+) = (3E)-nonen-2-one + NADPH + H(+). Functionally, NAD(P)H-dependent oxidoreductase involved in metabolic inactivation of pro- and anti-inflammatory eicosanoids: prostaglandins (PG), leukotrienes (LT) and lipoxins (LX). Catalyzes with high efficiency the reduction of the 13,14 double bond of 15-oxoPGs, including 15-oxo-PGE1, 15-oxo-PGE2, 15-oxo-PGF1-alpha and 15-oxo-PGF2-alpha. Catalyzes with lower efficiency the oxidation of the hydroxyl group at C12 of LTB4 and its derivatives, converting them into biologically less active 12-oxo-LTB4 metabolites. Reduces 15-oxo-LXA4 to 13,14 dihydro-15-oxo-LXA4, enhancing neutrophil recruitment at the inflammatory site. Plays a role in metabolic detoxification of alkenals and ketones. Reduces alpha,beta-unsaturated alkenals and ketones, particularly those with medium-chain length, showing highest affinity toward (2E)-decenal and (3E)-3-nonen-2-one. May inactivate 4-hydroxy-2-nonenal, a cytotoxic lipid constituent of oxidized low-density lipoprotein particles. The sequence is that of Prostaglandin reductase 1 (Ptgr1) from Mus musculus (Mouse).